Reading from the N-terminus, the 185-residue chain is Ribosome-recycling factor (185 aa).

This sequence belongs to the RRF family.

It is found in the cytoplasm. Responsible for the release of ribosomes from messenger RNA at the termination of protein biosynthesis. May increase the efficiency of translation by recycling ribosomes from one round of translation to another. In Pseudomonas savastanoi pv. phaseolicola (strain 1448A / Race 6) (Pseudomonas syringae pv. phaseolicola (strain 1448A / Race 6)), this protein is Ribosome-recycling factor.